Consider the following 265-residue polypeptide: Aquaporin-5 (265 aa).

The Cytoplasmic portion of the chain corresponds to 1–12 (MKKEVCSLAFFK). A helical membrane pass occupies residues 13–33 (AVFAEFLATLIFVFFGLGSAL). The Extracellular segment spans residues 34-39 (KWPSAL). Residues 40–60 (PTILQISIAFGLAIGTLAQAL) form a helical membrane-spanning segment. The Cytoplasmic portion of the chain corresponds to 61-65 (GPVSG). Positions 66–74 (GHINPAITL) form an intramembrane region, discontinuously helical. The NPA 1 signature appears at 69 to 71 (NPA). At 75 to 87 (ALLIGNQISLLRA) the chain is on the cytoplasmic side. Residues 88-108 (VFYVAAQLVGAIAGAGILYWL) traverse the membrane as a helical segment. The Extracellular portion of the chain corresponds to 109–126 (APLNARGNLAVNALNNNT). A glycan (N-linked (GlcNAc...) asparagine) is linked at N124. Residues 127–147 (TPGKAMVVELILTFQLALCIF) traverse the membrane as a helical segment. At 148–158 (SSTDSRRTSPV) the chain is on the cytoplasmic side. A helical membrane pass occupies residues 159–179 (GSPALSIGLSVTLGHLVGIYF). Residue T180 is a topological domain, extracellular. Residues 181–191 (GCSMNPARSFG) constitute an intramembrane region (discontinuously helical). Residues 185–187 (NPA) carry the NPA 2 motif. Topologically, residues 192–203 (PAVVMNRFSPSH) are extracellular. The chain crosses the membrane as a helical span at residues 204 to 224 (WVFWVGPIVGAMLAAILYFYL). Over 225 to 265 (LFPSSLSLHDRVAVVKGTYEPEEDWEDHREERKKTIELTAH) the chain is Cytoplasmic.

It belongs to the MIP/aquaporin (TC 1.A.8) family. As to quaternary structure, homotetramer; each monomer provides an independent water pore. Interacts with TRPV4; the interaction is probably indirect and regulates TRPV4 activation by hypotonicity. Salivary glands, lacrimal glands, corneal epithelium in eye, trachea and lung.

The protein resides in the apical cell membrane. It is found in the cell membrane. It localises to the cytoplasmic vesicle membrane. The catalysed reaction is H2O(in) = H2O(out). In terms of biological role, aquaporins form homotetrameric transmembrane channels, with each monomer independently mediating water transport across the plasma membrane along its osmotic gradient. Plays an important role in fluid secretion in salivary glands. Required for TRPV4 activation by hypotonicity. Together with TRPV4, controls regulatory volume decrease in salivary epithelial cells. Seems to play a redundant role in water transport in the eye, lung and in sweat glands. In Rattus norvegicus (Rat), this protein is Aquaporin-5.